The primary structure comprises 452 residues: Probable 1,4-beta-D-glucan cellobiohydrolase A (452 aa).

Positions 1-17 are cleaved as a signal peptide; that stretch reads MHQRALLFSALAVAANA. Asn81 carries N-linked (GlcNAc...) asparagine glycosylation. Glu226 (nucleophile) is an active-site residue. The active-site Proton donor is Glu231. A glycan (N-linked (GlcNAc...) asparagine) is linked at Asn284. The segment at 405-431 is disordered; it reads ADPSKPGVARGTCEHGAGDPENVESQH.

It belongs to the glycosyl hydrolase 7 (cellulase C) family.

Its subcellular location is the secreted. The enzyme catalyses Hydrolysis of (1-&gt;4)-beta-D-glucosidic linkages in cellulose and cellotetraose, releasing cellobiose from the non-reducing ends of the chains.. Functionally, the biological conversion of cellulose to glucose generally requires three types of hydrolytic enzymes: (1) Endoglucanases which cut internal beta-1,4-glucosidic bonds; (2) Exocellobiohydrolases that cut the disaccharide cellobiose from the non-reducing end of the cellulose polymer chain; (3) Beta-1,4-glucosidases which hydrolyze the cellobiose and other short cello-oligosaccharides to glucose. This chain is Probable 1,4-beta-D-glucan cellobiohydrolase A (cbhA), found in Aspergillus fumigatus (strain CBS 144.89 / FGSC A1163 / CEA10) (Neosartorya fumigata).